Here is a 695-residue protein sequence, read N- to C-terminus: Phosphate acetyltransferase (695 aa).

Residues 374–695 (FRYQLIQRAQ…LTAIQASVAR (322 aa)) form a phosphate acetyltransferase region.

The protein in the N-terminal section; belongs to the CobB/CobQ family. This sequence in the C-terminal section; belongs to the phosphate acetyltransferase and butyryltransferase family. Homohexamer.

Its subcellular location is the cytoplasm. It carries out the reaction acetyl-CoA + phosphate = acetyl phosphate + CoA. Its pathway is metabolic intermediate biosynthesis; acetyl-CoA biosynthesis; acetyl-CoA from acetate: step 2/2. Its function is as follows. Involved in acetate metabolism. In Pseudomonas putida (strain ATCC 47054 / DSM 6125 / CFBP 8728 / NCIMB 11950 / KT2440), this protein is Phosphate acetyltransferase (pta).